We begin with the raw amino-acid sequence, 560 residues long: Nitrite reductase (560 aa).

A signal peptide spans 1 to 26 (MSNVGKPILAGLIAGLSLLGLAVAQA). The interval 27-29 (AAP) is N-terminal tail. The Cytochrome c domain occupies 30-126 (EMTAEEKEAS…ARYIQHTPDI (97 aa)). Residues C47, C50, and H51 each contribute to the heme c site. Residues 61-80 (KNLEPHWSKTEADGKKTEGG) form a disordered region. Residues 63-78 (LEPHWSKTEADGKKTE) show a composition bias toward basic and acidic residues. 2 residues coordinate heme c: T97 and M101. The interval 127 to 560 (PPEFSLQDMK…NVFNTMNDVY (434 aa)) is D1-heme domain. The heme d1 site is built by H193, R236, S237, Y256, R382, and Q500.

Homodimer in solution. It depends on heme c as a cofactor. Heme is required as a cofactor.

Its subcellular location is the periplasm. The enzyme catalyses nitric oxide + Fe(III)-[cytochrome c] + H2O = Fe(II)-[cytochrome c] + nitrite + 2 H(+). It catalyses the reaction A + NH4(+) + H2O = hydroxylamine + AH2 + H(+). In Stutzerimonas stutzeri (Pseudomonas stutzeri), this protein is Nitrite reductase (nirS).